The sequence spans 186 residues: Intraflagellar transport protein 27 homolog (186 aa).

GTP contacts are provided by residues 12-19 (GDPAVGKT), 64-68 (DSAGK), and 123-126 (TKTD).

This sequence belongs to the small GTPase superfamily. Rab family. In terms of assembly, component of the IFT complex B, at least composed of IFT20, IFT22, IFT25, IFT27, IFT46, IFT52, TRAF3IP1/IFT54, IFT57, IFT74, IFT80, IFT81, and IFT88. Interacts with IFT25. Interacts with IFT70B. Interacts with RABL2/RABL2A; binding is equal in the presence of GTP or GDP. Interacts with IFT88. Interacts with ARL6; recognizes and binds with the GTP-free form of ARL6. As to expression, expressed predominantly in the testis (at protein level). Co-localizes with RABL2/RABL2A in the midpiece of elongated spermatids within the testis (at protein level).

Its subcellular location is the cell projection. The protein resides in the cilium. It localises to the cytoplasm. The protein localises to the flagellum. Its function is as follows. Small GTPase-like component of the intraflagellar transport (IFT) complex B that promotes the exit of the BBSome complex from cilia via its interaction with ARL6. Not involved in entry of the BBSome complex into cilium. Prevents aggregation of GTP-free ARL6. Required for hedgehog signaling. Forms a subcomplex within the IFT complex B with IFT25. Its role in intraflagellar transport is mainly seen in tissues rich in ciliated cells such as kidney and testis. Essential for male fertility, spermiogenesis and sperm flagella formation. Plays a role in the early development of the kidney. May be involved in the regulation of ureteric bud initiation. In Mus musculus (Mouse), this protein is Intraflagellar transport protein 27 homolog (Ift27).